The sequence spans 313 residues: D-alanine--D-alanine ligase (313 aa).

Positions 114-309 (KWLWKGVGLP…FSKLVLKLIS (196 aa)) constitute an ATP-grasp domain. Position 142–195 (142–195 (DLTFPVIVKPSHEGSSIGMRKVDTLDALQEAVDFAQQYDSEILIEQWITGREFT)) interacts with ATP. Residues Asp263, Glu276, and Asn278 each coordinate Mg(2+).

The protein belongs to the D-alanine--D-alanine ligase family. Requires Mg(2+) as cofactor. Mn(2+) serves as cofactor.

The protein localises to the cytoplasm. The enzyme catalyses 2 D-alanine + ATP = D-alanyl-D-alanine + ADP + phosphate + H(+). Its pathway is cell wall biogenesis; peptidoglycan biosynthesis. Functionally, cell wall formation. This Hydrogenovibrio crunogenus (strain DSM 25203 / XCL-2) (Thiomicrospira crunogena) protein is D-alanine--D-alanine ligase.